Consider the following 239-residue polypeptide: Cysteine-rich venom protein natrin-1 (239 aa).

Positions 1-18 (MIAFSLLCFAAVLQQSFG) are cleaved as a signal peptide. The region spanning 37–165 (VDLHNSLRRR…AWSYFYVCQY (129 aa)) is the SCP domain. 8 disulfides stabilise this stretch: C74–C152, C91–C166, C147–C163, C185–C192, C188–C197, C201–C234, C210–C228, and C219–C232. The ShKT domain occupies 201-234 (CTIYNKLTNCDSLLKQSSCQDDWIKSNCPASCFC).

Expressed by the venom gland.

The protein resides in the secreted. Its function is as follows. Inhibits calcium-activated potassium channels (KCa1.1/KCNMA1), voltage-gated potassium channel Kv1.3/KCNA3, and the calcium release channel/ryanodine receptor (RyR). Binds specifically to type 1 RyR (RyR1) from skeletal muscle. Inhibit both the binding of ryanodine to RyR1, and RyR1's calcium-channel activity. Inhibits carbachol-induced muscle contraction and weakly blocks muscle contraction evoked by potassium. This is Cysteine-rich venom protein natrin-1 from Naja atra (Chinese cobra).